Reading from the N-terminus, the 610-residue chain is UvrABC system protein C (610 aa).

One can recognise a GIY-YIG domain in the interval Ser-16 to Val-94. Positions Asp-204–Val-239 constitute a UVR domain.

This sequence belongs to the UvrC family. In terms of assembly, interacts with UvrB in an incision complex.

It is found in the cytoplasm. Its function is as follows. The UvrABC repair system catalyzes the recognition and processing of DNA lesions. UvrC both incises the 5' and 3' sides of the lesion. The N-terminal half is responsible for the 3' incision and the C-terminal half is responsible for the 5' incision. This chain is UvrABC system protein C, found in Escherichia coli O1:K1 / APEC.